Here is a 204-residue protein sequence, read N- to C-terminus: Protein GrpE (204 aa).

Basic and acidic residues-rich tracts occupy residues 1–21 (MEEL…EVKG) and 36–46 (EEKIETEVEQK). The interval 1 to 46 (MEELEKDKIERNEEMSEEVKGEGPPSELEQSEEVVEEKIETEVEQK) is disordered.

Belongs to the GrpE family. In terms of assembly, homodimer.

The protein localises to the cytoplasm. Participates actively in the response to hyperosmotic and heat shock by preventing the aggregation of stress-denatured proteins, in association with DnaK and GrpE. It is the nucleotide exchange factor for DnaK and may function as a thermosensor. Unfolded proteins bind initially to DnaJ; upon interaction with the DnaJ-bound protein, DnaK hydrolyzes its bound ATP, resulting in the formation of a stable complex. GrpE releases ADP from DnaK; ATP binding to DnaK triggers the release of the substrate protein, thus completing the reaction cycle. Several rounds of ATP-dependent interactions between DnaJ, DnaK and GrpE are required for fully efficient folding. The chain is Protein GrpE from Caldanaerobacter subterraneus subsp. tengcongensis (strain DSM 15242 / JCM 11007 / NBRC 100824 / MB4) (Thermoanaerobacter tengcongensis).